Reading from the N-terminus, the 70-residue chain is Cytochrome c oxidase subunit 8B, mitochondrial (70 aa).

The transit peptide at 1 to 24 directs the protein to the mitochondrion; that stretch reads MLSLRPALRLLQAPLRCWAVPKAH. At 25-35 the chain is on the mitochondrial matrix side; the sequence is VSAKPAETPTS. Residues 36-59 form a helical membrane-spanning segment; sequence PAEQAVGLSFIFITFLGPAGWILS. Over 60–70 the chain is Mitochondrial intermembrane; it reads HVENYKKRPRA.

Belongs to the cytochrome c oxidase VIII family. Component of the cytochrome c oxidase (complex IV, CIV), a multisubunit enzyme composed of 14 subunits. The complex is composed of a catalytic core of 3 subunits MT-CO1, MT-CO2 and MT-CO3, encoded in the mitochondrial DNA, and 11 supernumerary subunits COX4I, COX5A, COX5B, COX6A, COX6B, COX6C, COX7A, COX7B, COX7C, COX8 and NDUFA4, which are encoded in the nuclear genome. The complex exists as a monomer or a dimer and forms supercomplexes (SCs) in the inner mitochondrial membrane with NADH-ubiquinone oxidoreductase (complex I, CI) and ubiquinol-cytochrome c oxidoreductase (cytochrome b-c1 complex, complex III, CIII), resulting in different assemblies (supercomplex SCI(1)III(2)IV(1) and megacomplex MCI(2)III(2)IV(2)).

Its subcellular location is the mitochondrion inner membrane. It participates in energy metabolism; oxidative phosphorylation. Its function is as follows. Component of the cytochrome c oxidase, the last enzyme in the mitochondrial electron transport chain which drives oxidative phosphorylation. The respiratory chain contains 3 multisubunit complexes succinate dehydrogenase (complex II, CII), ubiquinol-cytochrome c oxidoreductase (cytochrome b-c1 complex, complex III, CIII) and cytochrome c oxidase (complex IV, CIV), that cooperate to transfer electrons derived from NADH and succinate to molecular oxygen, creating an electrochemical gradient over the inner membrane that drives transmembrane transport and the ATP synthase. Cytochrome c oxidase is the component of the respiratory chain that catalyzes the reduction of oxygen to water. Electrons originating from reduced cytochrome c in the intermembrane space (IMS) are transferred via the dinuclear copper A center (CU(A)) of subunit 2 and heme A of subunit 1 to the active site in subunit 1, a binuclear center (BNC) formed by heme A3 and copper B (CU(B)). The BNC reduces molecular oxygen to 2 water molecules using 4 electrons from cytochrome c in the IMS and 4 protons from the mitochondrial matrix. This is Cytochrome c oxidase subunit 8B, mitochondrial (COX8B) from Ateles belzebuth (White-bellied spider monkey).